The following is a 321-amino-acid chain: Citrate synthase (321 aa).

Active-site residues include H248 and D306.

Belongs to the citrate synthase family.

The enzyme catalyses oxaloacetate + acetyl-CoA + H2O = citrate + CoA + H(+). Its pathway is carbohydrate metabolism; tricarboxylic acid cycle; isocitrate from oxaloacetate: step 1/2. The polypeptide is Citrate synthase (gltA) (Bartonella bacilliformis).